Reading from the N-terminus, the 165-residue chain is Cyclic pyranopterin monophosphate synthase (165 aa).

Residues 76-78 (LCH) and 119-120 (ME) each bind substrate. Aspartate 134 is a catalytic residue.

It belongs to the MoaC family. Homohexamer; trimer of dimers.

It carries out the reaction (8S)-3',8-cyclo-7,8-dihydroguanosine 5'-triphosphate = cyclic pyranopterin phosphate + diphosphate. It functions in the pathway cofactor biosynthesis; molybdopterin biosynthesis. Catalyzes the conversion of (8S)-3',8-cyclo-7,8-dihydroguanosine 5'-triphosphate to cyclic pyranopterin monophosphate (cPMP). The protein is Cyclic pyranopterin monophosphate synthase of Photobacterium profundum (strain SS9).